The chain runs to 396 residues: Tryptophan synthase beta chain (396 aa).

Position 88 is an N6-(pyridoxal phosphate)lysine (K88).

The protein belongs to the TrpB family. Tetramer of two alpha and two beta chains. The cofactor is pyridoxal 5'-phosphate.

It catalyses the reaction (1S,2R)-1-C-(indol-3-yl)glycerol 3-phosphate + L-serine = D-glyceraldehyde 3-phosphate + L-tryptophan + H2O. It functions in the pathway amino-acid biosynthesis; L-tryptophan biosynthesis; L-tryptophan from chorismate: step 5/5. The beta subunit is responsible for the synthesis of L-tryptophan from indole and L-serine. This is Tryptophan synthase beta chain from Shewanella baltica (strain OS185).